The chain runs to 543 residues: CTP synthase (543 aa).

The amidoligase domain stretch occupies residues 1 to 267; the sequence is MKQTKYIFVT…LSPIAEILDL (267 aa). S15 is a binding site for CTP. S15 contributes to the UTP binding site. ATP is bound by residues 16-21 and D73; that span reads SLGKGI. 2 residues coordinate Mg(2+): D73 and E141. Residues 148–150, 188–193, and K224 each bind CTP; these read DIE and KTKPTQ. UTP-binding positions include 188–193 and K224; that span reads KTKPTQ. Residues 292 to 543 enclose the Glutamine amidotransferase type-1 domain; the sequence is KIAFVGKYVD…IKAAINYEDN (252 aa). Residue G354 coordinates L-glutamine. C381 serves as the catalytic Nucleophile; for glutamine hydrolysis. Residues 382–385, E405, and R473 contribute to the L-glutamine site; that span reads LGMQ. Residues H516 and E518 contribute to the active site.

Belongs to the CTP synthase family. Homotetramer.

It catalyses the reaction UTP + L-glutamine + ATP + H2O = CTP + L-glutamate + ADP + phosphate + 2 H(+). The catalysed reaction is L-glutamine + H2O = L-glutamate + NH4(+). It carries out the reaction UTP + NH4(+) + ATP = CTP + ADP + phosphate + 2 H(+). The protein operates within pyrimidine metabolism; CTP biosynthesis via de novo pathway; CTP from UDP: step 2/2. Allosterically activated by GTP, when glutamine is the substrate; GTP has no effect on the reaction when ammonia is the substrate. The allosteric effector GTP functions by stabilizing the protein conformation that binds the tetrahedral intermediate(s) formed during glutamine hydrolysis. Inhibited by the product CTP, via allosteric rather than competitive inhibition. In terms of biological role, catalyzes the ATP-dependent amination of UTP to CTP with either L-glutamine or ammonia as the source of nitrogen. Regulates intracellular CTP levels through interactions with the four ribonucleotide triphosphates. This Campylobacter jejuni subsp. jejuni serotype O:23/36 (strain 81-176) protein is CTP synthase.